Reading from the N-terminus, the 268-residue chain is Protein MGF 300-1L (268 aa).

Topologically, residues 1 to 175 are cytoplasmic; that stretch reads MVSLTTCCLK…QTFKTFYAKN (175 aa). Residues 176–193 form a helical membrane-spanning segment; sequence YSLSTLYCIFLAIYYKLY. The Extracellular portion of the chain corresponds to 194–268; it reads TALRKMVKIY…MYAFSQNDYW (75 aa). Residue asparagine 227 is glycosylated (N-linked (GlcNAc...) asparagine; by host).

It belongs to the asfivirus MGF 300 family.

The protein resides in the host membrane. Its function is as follows. Plays a role in virus cell tropism, and may be required for efficient virus replication in macrophages. This chain is Protein MGF 300-1L, found in African swine fever virus (strain Badajoz 1971 Vero-adapted) (Ba71V).